We begin with the raw amino-acid sequence, 756 residues long: Serine/threonine-protein kinase DCLK1 (756 aa).

Phosphoserine is present on residues Ser-32 and Ser-36. Phosphothreonine is present on Thr-46. Doublecortin domains are found at residues 57–143 and 186–269; these read KKVR…LEYT and KLVT…QDDF. Residues 288-393 form a disordered region; that stretch reads ASASRRGTTK…QRGWRREESE (106 aa). Low complexity predominate over residues 297–313; it reads KSPGPSRRSKSPASTSS. 13 positions are modified to phosphoserine: Ser-305, Ser-307, Ser-330, Ser-332, Ser-334, Ser-337, Ser-347, Ser-352, Ser-353, Ser-355, Ser-358, Cys-362, and Ser-364. Positions 347–364 are enriched in low complexity; sequence SQHGGSSTSLSSTKVCSS. The segment covering 366–375 has biased composition (acidic residues); it reads DENDGPGEGD. A Phosphoserine modification is found at Ser-392. One can recognise a Protein kinase domain in the interval 406 to 663; sequence YKVGRTIGDG…AVQVLEHPWV (258 aa). Residues 412–420 and Lys-435 each bind ATP; that span reads IGDGNFAVV. The Proton acceptor role is filled by Asp-527. Tyr-536 is modified (phosphotyrosine). A compositionally biased stretch (basic and acidic residues) spans 711–723; the sequence is QVFRRRRNQDVRS. The interval 711–756 is disordered; that stretch reads QVFRRRRNQDVRSRYKAQPAPPELNSESEDYSPSSSETVRSPNSPF. 3 positions are modified to phosphoserine: Ser-742, Ser-751, and Ser-754.

Belongs to the protein kinase superfamily. CAMK Ser/Thr protein kinase family. CaMK subfamily.

It catalyses the reaction L-seryl-[protein] + ATP = O-phospho-L-seryl-[protein] + ADP + H(+). It carries out the reaction L-threonyl-[protein] + ATP = O-phospho-L-threonyl-[protein] + ADP + H(+). In terms of biological role, probable kinase that may be involved in a calcium-signaling pathway controlling neuronal migration in the developing brain. May also participate in functions of the mature nervous system. In Mus musculus (Mouse), this protein is Serine/threonine-protein kinase DCLK1 (Dclk1).